Consider the following 244-residue polypeptide: Pyridoxine 5'-phosphate synthase (244 aa).

Asn-9 lines the 3-amino-2-oxopropyl phosphate pocket. 11–12 (DH) lines the 1-deoxy-D-xylulose 5-phosphate pocket. Arg-20 is a 3-amino-2-oxopropyl phosphate binding site. The active-site Proton acceptor is His-45. 1-deoxy-D-xylulose 5-phosphate contacts are provided by Arg-47 and His-52. Glu-72 (proton acceptor) is an active-site residue. Residue Thr-102 participates in 1-deoxy-D-xylulose 5-phosphate binding. Catalysis depends on His-193, which acts as the Proton donor. 3-amino-2-oxopropyl phosphate is bound by residues Gly-194 and 215–216 (GH).

This sequence belongs to the PNP synthase family. In terms of assembly, homooctamer; tetramer of dimers.

The protein localises to the cytoplasm. It catalyses the reaction 3-amino-2-oxopropyl phosphate + 1-deoxy-D-xylulose 5-phosphate = pyridoxine 5'-phosphate + phosphate + 2 H2O + H(+). It functions in the pathway cofactor biosynthesis; pyridoxine 5'-phosphate biosynthesis; pyridoxine 5'-phosphate from D-erythrose 4-phosphate: step 5/5. Its function is as follows. Catalyzes the complicated ring closure reaction between the two acyclic compounds 1-deoxy-D-xylulose-5-phosphate (DXP) and 3-amino-2-oxopropyl phosphate (1-amino-acetone-3-phosphate or AAP) to form pyridoxine 5'-phosphate (PNP) and inorganic phosphate. The chain is Pyridoxine 5'-phosphate synthase from Blochmanniella pennsylvanica (strain BPEN).